The primary structure comprises 443 residues: Mitochondrial enolase superfamily member 1 (443 aa).

Substrate contacts are provided by residues G24–D26 and Y34. S148 carries the phosphoserine modification. K220 contributes to the substrate binding site. K222 (proton donor/acceptor) is an active-site residue. Residue D250 participates in Mg(2+) binding. Residues N252, E276, E305, H355–G357, and E386 each bind substrate. The Mg(2+) site is built by E276 and E305. Residue H355 is part of the active site.

It belongs to the mandelate racemase/muconate lactonizing enzyme family. ENOSF1 subfamily. The cofactor is Mg(2+). Post-translationally, could be sumoylated.

It is found in the mitochondrion. The catalysed reaction is L-fuconate = 2-dehydro-3-deoxy-L-fuconate + H2O. In terms of biological role, plays a role in the catabolism of L-fucose, a sugar that is part of the carbohydrates that are attached to cellular glycoproteins. Catalyzes the dehydration of L-fuconate to 2-keto-3-deoxy-L-fuconate by the abstraction of the 2-proton to generate an enediolate intermediate that is stabilized by the magnesium ion. May down-regulate thymidylate synthase activity, possibly already at the RNA level, by promoting the degradation of TYMS mRNA via an antisense RNA-based mechanism. This chain is Mitochondrial enolase superfamily member 1 (ENOSF1), found in Pongo abelii (Sumatran orangutan).